A 305-amino-acid chain; its full sequence is uncharacterized protein (305 aa).

The disordered stretch occupies residues 208–236 (SYAQSPAVKKKKWRHSGGKKNNPRENHID). Residues 215–225 (VKKKKWRHSGG) are compositionally biased toward basic residues.

This is an uncharacterized protein from Bacillus subtilis (strain 168).